Here is a 254-residue protein sequence, read N- to C-terminus: uncharacterized protein (254 aa).

A signal peptide spans 1 to 22 (MKRLKKIVLCISFLFLTIFIGG). The N-palmitoyl cysteine moiety is linked to residue cysteine 23. Residue cysteine 23 is the site of S-diacylglycerol cysteine attachment.

It belongs to the staphylococcal tandem lipoprotein family.

It localises to the cell membrane. This is an uncharacterized protein from Staphylococcus aureus (strain MSSA476).